We begin with the raw amino-acid sequence, 274 residues long: Glutamate--cysteine ligase regulatory subunit (274 aa).

Phosphoserine is present on serine 59. Lysine 263 carries the N6-acetyllysine modification.

Belongs to the aldo/keto reductase family. Glutamate--cysteine ligase light chain subfamily. As to quaternary structure, heterodimer of a catalytic heavy chain and a regulatory light chain.

It participates in sulfur metabolism; glutathione biosynthesis; glutathione from L-cysteine and L-glutamate: step 1/2. The protein is Glutamate--cysteine ligase regulatory subunit (Gclm) of Mus musculus (Mouse).